The chain runs to 55 residues: uncharacterized protein (55 aa).

A helical transmembrane segment spans residues 7-24; the sequence is VALVGAVLATLTACTGHI.

It is found in the membrane. This is an uncharacterized protein from Escherichia coli O157:H7.